The primary structure comprises 202 residues: Nucleoid occlusion factor SlmA (202 aa).

One can recognise an HTH tetR-type domain in the interval 14–75 (KERQQQVLEV…ALIERIEQTL (62 aa)). The H-T-H motif DNA-binding region spans 38–57 (TTERLAKAVGVSEGALYRYF).

The protein belongs to the nucleoid occlusion factor SlmA family. In terms of assembly, homodimer. Interacts with FtsZ.

The protein resides in the cytoplasm. Its subcellular location is the nucleoid. Its function is as follows. Required for nucleoid occlusion (NO) phenomenon, which prevents Z-ring formation and cell division over the nucleoid. Acts as a DNA-associated cell division inhibitor that binds simultaneously chromosomal DNA and FtsZ, and disrupts the assembly of FtsZ polymers. SlmA-DNA-binding sequences (SBS) are dispersed on non-Ter regions of the chromosome, preventing FtsZ polymerization at these regions. The chain is Nucleoid occlusion factor SlmA from Actinobacillus pleuropneumoniae serotype 5b (strain L20).